Consider the following 365-residue polypeptide: Aminotransferase poxL (365 aa).

Arg-92 contributes to the pyridoxal 5'-phosphate binding site. At Lys-193 the chain carries N6-(pyridoxal phosphate)lysine. Position 229 (Glu-229) interacts with pyridoxal 5'-phosphate.

The protein belongs to the class-IV pyridoxal-phosphate-dependent aminotransferase family. It depends on pyridoxal 5'-phosphate as a cofactor.

It functions in the pathway secondary metabolite biosynthesis. Its function is as follows. Aminotransferase; part of the gene cluster that mediates the biosynthesis of oxaleimides, cytotoxic compounds containing an unusual disubstituted succinimide moiety. The first step of the pathway is provided by the HR-PKS poxF that serves in a new mode of collaborative biosynthesis with the PKS-NRPS poxE, by providing the olefin containing amino acid substrate via the synthesis of an ACP-bound dec-4-enoate. The cytochrome P450 monooxygenase poxM-catalyzed oxidation at the alpha-position creates the enzyme-bound 2-hydroxydec-4-enoyl-ACP thioester, which may be prone to spontaneous hydrolysis to yield 2-hydroxydec-4-enoic acid due to increased electrophilicity of the carbonyl. 2-hydroxydec-4-enoic acid can then be further oxidized by poxM to yield the alpha-ketoacid 2-oxodec-4-enoicacid, which is reductively aminated by the aminotransferase poxL to yield (S,E)-2-aminodec-4-enoic acid. The Hybrid PKS-NRPS synthetase poxE then performs condensation between the octaketide product of its PKS modules and the amino group of (S,E)-2-aminodec-4-enoic acid which is activated and incorporated by the adenylation domain. The resulting aminoacyl product can be cyclized by the Diels-Alderase PoxQ and reductively released by the reductive (R) domain of poxE to yield an aldehyde intermediate. The released aldehyde is then substrate for a Knoevenagel condensation by the hydrolyase poxO followed by an oxidation at the 5-position of the pyrrolidone ring. The presence of the olefin from the amino acid building block allows for migration of the substituted allyl group to occur. This allylic transposition reaction takes place in a conjugate addition, semipinacol-like fashion to yield a succinimide intermediate. Iterative two-electron oxidations of the C7 methyl of the succinimide intermediate to the carboxylic acid can be catalyzed by one of two remaining cytochrome P450 monooxygenasess poxC or poxD to yield oxaleimide A. Subsequent oxidation yields the maleimide scaffold oxaleimide I. Both oxaleimide A and oxaleimide I can undergo oxidative modifications in the decalin ring to yield the series of products oxaleimides B to H. The sequence is that of Aminotransferase poxL from Penicillium oxalicum.